Consider the following 149-residue polypeptide: Large ribosomal subunit protein bL20m (149 aa).

A mitochondrion-targeting transit peptide spans 1 to 9 (MVFLSAPLW).

It belongs to the bacterial ribosomal protein bL20 family. As to quaternary structure, component of the mitochondrial ribosome large subunit (39S) which comprises a 16S rRNA and about 50 distinct proteins. Interacts with OXA1L.

Its subcellular location is the mitochondrion. The polypeptide is Large ribosomal subunit protein bL20m (MRPL20) (Bos taurus (Bovine)).